A 1138-amino-acid chain; its full sequence is Lysylphosphatidylglycerol biosynthesis bifunctional protein LysX (1138 aa).

Residues 1-15 (MALDTPSSDLPVSTD) are compositionally biased toward polar residues. Positions 1-34 (MALDTPSSDLPVSTDDTAEHQPTPAHRPPSAADR) are disordered. Residues 1–646 (MALDTPSSDL…LIAQLESEED (646 aa)) are phosphatidylglycerol lysyltransferase. 6 helical membrane passes run 56–76 (IAGT…IFPL), 92–112 (IVSL…VAIA), 119–139 (IAWW…ALLL), 155–175 (IQIW…IVTY), 190–210 (ALGV…GLVW), and 247–267 (IVID…AATV). Residues 647–1138 (RTAVEVHRPE…AFPMVKPTDA (492 aa)) form a lysine--tRNA ligase region. Positions 698–772 (VTIAGRVTKM…GELSVLIDAW (75 aa)) form a DNA-binding region, OB. Asp1048 and Glu1055 together coordinate Mg(2+).

This sequence in the N-terminal section; belongs to the LPG synthetase family. In the C-terminal section; belongs to the class-II aminoacyl-tRNA synthetase family. The cofactor is Mg(2+).

It localises to the cell membrane. It carries out the reaction tRNA(Lys) + L-lysine + ATP = L-lysyl-tRNA(Lys) + AMP + diphosphate. The catalysed reaction is L-lysyl-tRNA(Lys) + a 1,2-diacyl-sn-glycero-3-phospho-(1'-sn-glycerol) = a 1,2-diacyl-sn-glycero-3-phospho-1'-(3'-O-L-lysyl)-sn-glycerol + tRNA(Lys). Its function is as follows. Catalyzes the production of L-lysyl-tRNA(Lys)transfer and the transfer of a lysyl group from L-lysyl-tRNA(Lys) to membrane-bound phosphatidylglycerol (PG), which produces lysylphosphatidylglycerol (LPG), one of the components of the bacterial membrane with a positive net charge. LPG synthesis contributes to the resistance to cationic antimicrobial peptides (CAMPs) and likely protects M.tuberculosis against the CAMPs produced by competiting microorganisms (bacteriocins). In fact, the modification of anionic phosphatidylglycerol with positively charged L-lysine results in repulsion of the peptides. The protein is Lysylphosphatidylglycerol biosynthesis bifunctional protein LysX (lysX) of Gordonia bronchialis (strain ATCC 25592 / DSM 43247 / BCRC 13721 / JCM 3198 / KCTC 3076 / NBRC 16047 / NCTC 10667) (Rhodococcus bronchialis).